The following is a 427-amino-acid chain: UPF0597 protein CPF_0803 (427 aa).

Belongs to the UPF0597 family.

This chain is UPF0597 protein CPF_0803, found in Clostridium perfringens (strain ATCC 13124 / DSM 756 / JCM 1290 / NCIMB 6125 / NCTC 8237 / Type A).